The primary structure comprises 238 residues: Ribonuclease PH (238 aa).

Residues Arg-86 and 124-126 (GTR) contribute to the phosphate site.

The protein belongs to the RNase PH family. As to quaternary structure, homohexameric ring arranged as a trimer of dimers.

It carries out the reaction tRNA(n+1) + phosphate = tRNA(n) + a ribonucleoside 5'-diphosphate. Phosphorolytic 3'-5' exoribonuclease that plays an important role in tRNA 3'-end maturation. Removes nucleotide residues following the 3'-CCA terminus of tRNAs; can also add nucleotides to the ends of RNA molecules by using nucleoside diphosphates as substrates, but this may not be physiologically important. Probably plays a role in initiation of 16S rRNA degradation (leading to ribosome degradation) during starvation. This is Ribonuclease PH from Hahella chejuensis (strain KCTC 2396).